We begin with the raw amino-acid sequence, 237 residues long: MFVFILLSLAAVLQQSFGNVDFNSESPRIKAKQREIVDKHNAFRRSVRPTASNMLRMEWYSEAASNAERWAYRCVLDHSPETSRILNGIQCGENIYMSSIPRTWIDIIKLWHDEYKNFIYGVGANPPGSIIGHYTQIVWYKSYRIGCAASYCPSSSYDYFYVCQYCPTGNFGGLTATPYKSGPTCGDCPSACDNGLCTNPCSREDVFTNCKSLVAKSNCQDDYIRKNCLATCFCPNK.

The N-terminal stretch at 1–18 (MFVFILLSLAAVLQQSFG) is a signal peptide. The 129-residue stretch at 37–165 (VDKHNAFRRS…SYDYFYVCQY (129 aa)) folds into the SCP domain. 7 disulfides stabilise this stretch: Cys-74-Cys-152, Cys-91-Cys-166, Cys-147-Cys-163, Cys-185-Cys-192, Cys-188-Cys-197, Cys-201-Cys-234, and Cys-219-Cys-232. In terms of domain architecture, ShKT spans 201-234 (CSREDVFTNCKSLVAKSNCQDDYIRKNCLATCFC).

This sequence belongs to the CRISP family. As to expression, expressed by the venom gland.

It localises to the secreted. In terms of biological role, weakly blocks contraction of smooth muscle elicited by high potassium-induced depolarization, but does not block caffeine-stimulated contraction. May target voltage-gated calcium channels on smooth muscle. In Dispholidus typus (Boomslang), this protein is Cysteine-rich venom protein DIS3.